A 253-amino-acid chain; its full sequence is Triosephosphate isomerase (253 aa).

Residue 9–11 (NWK) coordinates substrate. H95 acts as the Electrophile in catalysis. The active-site Proton acceptor is E167. Substrate-binding positions include G173, S213, and 234–235 (GG). Residue S213 is modified to Phosphoserine.

It belongs to the triosephosphate isomerase family. Homodimer.

Its subcellular location is the cytoplasm. It catalyses the reaction D-glyceraldehyde 3-phosphate = dihydroxyacetone phosphate. It participates in carbohydrate biosynthesis; gluconeogenesis. The protein operates within carbohydrate degradation; glycolysis; D-glyceraldehyde 3-phosphate from glycerone phosphate: step 1/1. In terms of biological role, involved in the gluconeogenesis. Catalyzes stereospecifically the conversion of dihydroxyacetone phosphate (DHAP) to D-glyceraldehyde-3-phosphate (G3P). The sequence is that of Triosephosphate isomerase from Lysinibacillus sphaericus (strain C3-41).